Reading from the N-terminus, the 1320-residue chain is Immunoglobulin superfamily member 1 (1320 aa).

The first 18 residues, 1 to 18 (MMLRTFTLLLLCIWLNRG), serve as a signal peptide directing secretion. Residues 19 to 504 (MTSMAAVESQ…LPWNSILNEA (486 aa)) lie on the Extracellular side of the membrane. Ig-like C2-type domains follow at residues 29–113 (PELW…KILE), 115–212 (EAPG…KLVV), 224–308 (HPGP…IWVT), 312–399 (PKTW…ATYN), and 401–482 (VELI…HRSE). Residue Asn44 is glycosylated (N-linked (GlcNAc...) asparagine). An intrachain disulfide couples Cys49 to Cys97. Residues Asn329, Asn365, and Asn372 are each glycosylated (N-linked (GlcNAc...) asparagine). Disulfide bonds link Cys334/Cys383 and Cys423/Cys466. The chain crosses the membrane as a helical span at residues 505–525 (IRVSLTVQFLSLLLLVLWLQW). At 526–534 (KCRRLRLRE) the chain is on the cytoplasmic side. The chain crosses the membrane as a helical span at residues 535-555 (AWLLGTAQGVAMLVILIALLC). Residues 556 to 1320 (CGLCNGALTE…GVSVEQTVPI (765 aa)) are Extracellular-facing. Ig-like C2-type domains lie at 572–665 (PTPK…VGTD), 662–756 (VGTD…ELVI), 761–853 (PKPF…LIVT), 857–942 (PKPT…YLST), 949–1044 (TDTF…ELIV), 1049–1134 (PKPS…NHSN), and 1145–1226 (PKPS…EPSD). 9 N-linked (GlcNAc...) asparagine glycosylation sites follow: Asn591, Asn731, Asn782, Asn830, Asn874, Asn923, Asn970, Asn1011, and Asn1066. Cys783 and Cys833 are disulfide-bonded. The cysteines at positions 879 and 926 are disulfide-linked. Cys1071 and Cys1118 are disulfide-bonded. Asn1131 and Asn1207 each carry an N-linked (GlcNAc...) asparagine glycan. The cysteines at positions 1167 and 1210 are disulfide-linked.

In terms of assembly, interacts with INHA; the interaction is not confirmed by standard receptor binding assays. Interacts with ACVR1B; the interaction appears to be ligand-dependent as it is diminished by inhibin B and activin A. Interacts with ACVR2A, ACVR2B, ACVRL1 and BMPR1B. Interacts with HECTD1. Expressed in pituitary gland, testis and liver. Isoform 2 is expressed pituitary gland and testis.

It is found in the membrane. The protein resides in the secreted. Its function is as follows. Seems to be a coreceptor in inhibin signaling, but seems not to be a high-affinity inhibin receptor. Antagonizes activin A signaling in the presence or absence of inhibin B. Necessary to mediate a specific antagonistic effect of inhibin B on activin-stimulated transcription. The sequence is that of Immunoglobulin superfamily member 1 (Igsf1) from Rattus norvegicus (Rat).